The sequence spans 91 residues: Acylphosphatase (91 aa).

The 87-residue stretch at 5–91 (RLTAWVRGHV…RGSFTGFEER (87 aa)) folds into the Acylphosphatase-like domain. Residues R20 and N38 contribute to the active site.

It belongs to the acylphosphatase family.

It carries out the reaction an acyl phosphate + H2O = a carboxylate + phosphate + H(+). The polypeptide is Acylphosphatase (acyP) (Thermobifida fusca (strain YX)).